Here is a 507-residue protein sequence, read N- to C-terminus: Glutamyl-tRNA(Gln) amidotransferase subunit A, mitochondrial (507 aa).

Residues lysine 79 and serine 160 each act as charge relay system in the active site. Serine 184 serves as the catalytic Acyl-ester intermediate.

The protein belongs to the amidase family. GatA subfamily. Subunit of the heterotrimeric GatCAB amidotransferase (AdT) complex, composed of A, B and C subunits.

The protein resides in the mitochondrion. It catalyses the reaction L-glutamyl-tRNA(Gln) + L-glutamine + ATP + H2O = L-glutaminyl-tRNA(Gln) + L-glutamate + ADP + phosphate + H(+). Allows the formation of correctly charged Gln-tRNA(Gln) through the transamidation of misacylated Glu-tRNA(Gln) in the mitochondria. The reaction takes place in the presence of glutamine and ATP through an activated gamma-phospho-Glu-tRNA(Gln). The protein is Glutamyl-tRNA(Gln) amidotransferase subunit A, mitochondrial of Drosophila pseudoobscura pseudoobscura (Fruit fly).